Consider the following 187-residue polypeptide: Cytochrome c oxidase assembly protein CtaG (187 aa).

Over 1–9 (MSKKSNKNL) the chain is Cytoplasmic. The chain crosses the membrane as a helical; Signal-anchor for type II membrane protein span at residues 10-30 (AFSLLGLIISMVLLSFASVPI). The Periplasmic portion of the chain corresponds to 31–187 (YNLFCKVTGY…IASLRGNTKY (157 aa)).

This sequence belongs to the COX11/CtaG family.

The protein resides in the cell inner membrane. Exerts its effect at some terminal stage of cytochrome c oxidase synthesis, probably by being involved in the insertion of the copper B into subunit I. The polypeptide is Cytochrome c oxidase assembly protein CtaG (Rickettsia felis (strain ATCC VR-1525 / URRWXCal2) (Rickettsia azadi)).